The primary structure comprises 2035 residues: Host cell factor 1 (2035 aa).

Ala-2 carries the post-translational modification N-acetylalanine. Ser-6 is modified (phosphoserine). Kelch repeat units lie at residues 44 to 89, 93 to 140, 148 to 194, 217 to 265, and 266 to 313; these read LIVV…GFVC, RLLV…RLGH, KCYL…ITYG, KLVI…TIGN, and KMYV…LMDT. Glycyl lysine isopeptide (Lys-Gly) (interchain with G-Cter in ubiquitin) cross-links involve residues Lys-105, Lys-163, and Lys-244. Residue Lys-282 forms a Glycyl lysine isopeptide (Lys-Gly) (interchain with G-Cter in SUMO2) linkage. The residue at position 288 (Lys-288) is an N6-acetyllysine. Residue Lys-363 forms a Glycyl lysine isopeptide (Lys-Gly) (interchain with G-Cter in ubiquitin) linkage. A Fibronectin type-III 1 domain is found at 366–466; that stretch reads PPARVQLVRA…TTTTIQVLPT (101 aa). Residues 407-434 are disordered; it reads ATATSPTPNPVPSVPANPPKSPAPAAAA. Ser-411 carries the post-translational modification Phosphoserine. The segment covering 413–428 has biased composition (pro residues); the sequence is TPNPVPSVPANPPKSP. The interval 500–550 is required for interaction with OGT; sequence LVTMRPASQAGKAPVTVTSLPAGVRMVVPTQSAQGTVIGSSPQMSGMAALA. An omega-N-methylarginine mark is found at Arg-504 and Arg-524. Phosphoserine occurs at positions 598, 666, and 669. Residues 610-722 form an interaction with SIN3A region; it reads LKTAAAQVGT…KGPLPAGTIL (113 aa). The interaction with ZBTB17 stretch occupies residues 750–902; the sequence is ILGISSVSPS…SLAGAGGHST (153 aa). Lys-813 bears the N6-acetyllysine mark. The tract at residues 813–912 is interaction with GABP2; that stretch reads KIITAVPKIA…SASLATPITT (100 aa). 3 HCF repeat repeats span residues 1010–1035, 1072–1097, and 1101–1126; these read TLVCSNPPCETHETGTTNTATTTVVA, VRVCSNPPCETHETGTTNTATTATSN, and QHGCSNPPCETHETGTTNTATTAMSS. Residues 1158–1183 form an HCF repeat 4; degenerate repeat; the sequence is AAQGSKSQCQTRQTSATSTTMTVMAT. Ser-1205 is subject to Phosphoserine. At Arg-1219 the chain carries Omega-N-methylarginine. Phosphoserine is present on Ser-1224. 2 HCF repeat repeats span residues 1286–1311 and 1314–1339; these read TQVCSNPPCETHETGTTNTATTSNAG and QRVCSNPPCETHETGTTHTATTATSN. 3 disordered regions span residues 1292 to 1371, 1435 to 1470, and 1487 to 1515; these read PPCE…TMSV, TVTSNMSSNQDPPPAASDQGEVESTQGDSVNITSSS, and VTQSTPVPGPSVPPPEELQVSPGPRQQLP. 3 stretches are compositionally biased toward low complexity: residues 1299–1312, 1329–1339, and 1362–1371; these read TGTTNTATTSNAGS, TTHTATTATSN, and TTSTGTTMSV. An HCF repeat 7; degenerate repeat occupies 1349–1374; sequence QQPPAGRPCETHQTTSTGTTMSVSVG. Residues 1414–1439 form an HCF repeat 8 repeat; sequence QRVCSNPPCETHETGTTHTATTVTSN. Phosphothreonine is present on Thr-1491. Residues 1493–1502 show a composition bias toward pro residues; that stretch reads VPGPSVPPPE. 3 positions are modified to phosphoserine: Ser-1497, Ser-1507, and Ser-1771. 2 consecutive Fibronectin type-III domains span residues 1797-1888 and 1890-2006; these read LPPP…TCLP and FPGA…TSKD. Residues Lys-1807 and Lys-1808 each participate in a glycyl lysine isopeptide (Lys-Gly) (interchain with G-Cter in ubiquitin) cross-link. Position 1838 is a phosphoserine (Ser-1838). Positions 1994-2035 are disordered; the sequence is ATQVRWLQETSKDSSGTKPANKRPMSSPEMKSAPKKSKADGQ. Residue Lys-2005 is modified to N6-acetyllysine. Residue Lys-2024 forms a Glycyl lysine isopeptide (Lys-Gly) (interchain with G-Cter in SUMO2) linkage.

As to quaternary structure, composed predominantly of six polypeptides ranging from 110 to 150 kDa and a minor 300 kDa polypeptide. The majority of N- and C-terminal cleavage products remain tightly, albeit non-covalently, associated. Interacts with POU2F1, CREB3, ZBTB17, EGR2, E2F4, CREBZF, SP1, GABP2, Sin3 HDAC complex (SIN3A, HDAC1, HDAC2, SUDS3), SAP30, SIN3B and FHL2. Component of a MLL1 complex, composed of at least the core components KMT2A/MLL1, ASH2L, HCFC1, WDR5 and RBBP5, as well as the facultative components BACC1, CHD8, DPY30, E2F6, HCFC2, HSP70, INO80C, KANSL1, LAS1L, MAX, MCRS1, MEN1, MGA, KAT8, PELP1, PHF20, PRP31, RING2, RUVBL1, RUVBL2, SENP3, TAF1, TAF4, TAF6, TAF7, TAF9 and TEX10. Component of a THAP1/THAP3-HCFC1-OGT complex that is required for the regulation of the transcriptional activity of RRM1. Interacts directly with THAP3 (via its HBM). Interacts (via the Kelch-repeat domain) with THAP1 (via the HBM); the interaction recruits HCHC1 to the RRM1. Interacts with THAP7 and THAP11 (via the HMB). Interacts directly with OGT; the interaction, which requires the HCFC1 cleavage site domain, glycosylates and promotes the proteolytic processing of HCFC1, retains OGT in the nucleus and impacts the expression of herpes simplex virus immediate early viral genes. Component of the SET1 complex, at least composed of the catalytic subunit (SETD1A or SETD1B), WDR5, WDR82, RBBP5, ASH2L, CXXC1, HCFC1 and DPY30. Component of the NSL complex at least composed of MOF/KAT8, KANSL1, KANSL2, KANSL3, MCRS1, PHF20, OGT1/OGT, WDR5 and HCFC1. Component of a complex at least composed of ZNF335, HCFC1, CCAR2, EMSY, MKI67, RBBP5, ASH2L and WDR5; the complex is formed as a result of interactions between components of a nuclear receptor-mediated transcription complex and a histone methylation complex. Within the complex interacts with ZNF335. Interacts with TET2 and TET3. Interacts with HCFC1R1. Interacts with THAP11. Interacts (via Kelch domain) with KMT2E/MLL5 isoform 3 (via HBM motif). Interacts with E2F1. Accessory scaffold component of the polycomb repressive deubiquitinase (PR-DUB) complex, at least composed of BAP1, one of ASXL1, ASXL2 or (probably) ASXL3 and one of MBD5 or MBD6; the PR-DUB core associates with a number of accessory proteins, including FOXK1, FOXK2, KDM1B, HCFC1, YY1 and OGT. Interacts with YY1 (via Gly-rich region); the interaction is direct. Interacts with BAP1 (via HBM-like motif). (Microbial infection) Associates with the VP16-induced complex; binding to HCFC1 activates the viral transcriptional activator VP16 for association with POU2F1, to form a multiprotein-DNA complex responsible for activating transcription of the viral immediate early genes. Interacts with the viral transactivator protein VP16. In terms of processing, proteolytically cleaved at one or several PPCE--THET sites within the HCF repeats. Further cleavage of the primary N- and C-terminal chains results in a 'trimming' and accumulation of the smaller chains. Cleavage is promoted by O-glycosylation. O-glycosylated. GlcNAcylation by OGT promotes proteolytic processing. Post-translationally, ubiquitinated. Lys-1807 and Lys-1808 are ubiquitinated both via 'Lys-48'- and 'Lys-63'-linked polyubiquitin chains. BAP1 mediated deubiquitination of 'Lys-48'-linked polyubiquitin chains; deubiquitination by BAP1 does not seem to stabilize the protein. Highly expressed in fetal tissues and the adult kidney. Present in all tissues tested.

The protein localises to the cytoplasm. It is found in the nucleus. Functionally, transcriptional coregulator. Serves as a scaffold protein, bridging interactions between transcription factors, including THAP11 and ZNF143, and transcriptional coregulators. Involved in control of the cell cycle. Also antagonizes transactivation by ZBTB17 and GABP2; represses ZBTB17 activation of the p15(INK4b) promoter and inhibits its ability to recruit p300. Coactivator for EGR2 and GABP2. Tethers the chromatin modifying Set1/Ash2 histone H3 'Lys-4' methyltransferase (H3K4me) and Sin3 histone deacetylase (HDAC) complexes (involved in the activation and repression of transcription, respectively) together. Component of a THAP1/THAP3-HCFC1-OGT complex that is required for the regulation of the transcriptional activity of RRM1. As part of the NSL complex it may be involved in acetylation of nucleosomal histone H4 on several lysine residues. Recruits KMT2E/MLL5 to E2F1 responsive promoters promoting transcriptional activation and thereby facilitates G1 to S phase transition. Modulates expression of homeobox protein PDX1, perhaps acting in concert with transcription factor E2F1, thereby regulating pancreatic beta-cell growth and glucose-stimulated insulin secretion. May negatively modulate transcriptional activity of FOXO3. In terms of biological role, (Microbial infection) In case of human herpes simplex virus (HSV) infection, HCFC1 forms a multiprotein-DNA complex with the viral transactivator protein VP16 and POU2F1 thereby enabling the transcription of the viral immediate early genes. This is Host cell factor 1 from Homo sapiens (Human).